The primary structure comprises 315 residues: Peroxidase 4 (315 aa).

The N-terminal stretch at 1–19 (MAIFKILVLLLSLCCFSQA) is a signal peptide. Q20 is subject to Pyrrolidone carboxylic acid. 4 cysteine pairs are disulfide-bonded: C30/C110, C63/C68, C116/C311, and C195/C221. The Proton acceptor role is filled by H61. Ca(2+) contacts are provided by D62, V65, G67, D69, and S71. P158 provides a ligand contact to substrate. H188 is a binding site for heme b. Residue T189 coordinates Ca(2+). A glycan (N-linked (GlcNAc...) asparagine) is linked at N205. 3 residues coordinate Ca(2+): D234, T237, and D242.

This sequence belongs to the peroxidase family. Classical plant (class III) peroxidase subfamily. Requires heme b as cofactor. Ca(2+) serves as cofactor.

Its subcellular location is the secreted. The enzyme catalyses 2 a phenolic donor + H2O2 = 2 a phenolic radical donor + 2 H2O. Functionally, removal of H(2)O(2), oxidation of toxic reductants, biosynthesis and degradation of lignin, suberization, auxin catabolism, response to environmental stresses such as wounding, pathogen attack and oxidative stress. These functions might be dependent on each isozyme/isoform in each plant tissue. The protein is Peroxidase 4 (PER4) of Arabidopsis thaliana (Mouse-ear cress).